Reading from the N-terminus, the 447-residue chain is Dihydroorotase (447 aa).

Zn(2+) contacts are provided by His81 and His83. Substrate contacts are provided by residues 83–85 (HFR) and Asn115. Zn(2+) is bound by residues Asp171, His198, and His252. Residue Asn298 coordinates substrate. A Zn(2+)-binding site is contributed by Asp325. Asp325 is an active-site residue. Substrate is bound by residues His329 and 343-344 (FG).

The protein belongs to the metallo-dependent hydrolases superfamily. DHOase family. Class I DHOase subfamily. Zn(2+) serves as cofactor.

The enzyme catalyses (S)-dihydroorotate + H2O = N-carbamoyl-L-aspartate + H(+). The protein operates within pyrimidine metabolism; UMP biosynthesis via de novo pathway; (S)-dihydroorotate from bicarbonate: step 3/3. Catalyzes the reversible cyclization of carbamoyl aspartate to dihydroorotate. The sequence is that of Dihydroorotase from Ehrlichia chaffeensis (strain ATCC CRL-10679 / Arkansas).